The sequence spans 234 residues: Fibrillarin-like rRNA/tRNA 2'-O-methyltransferase (234 aa).

S-adenosyl-L-methionine contacts are provided by residues 90-91 (TT), 109-110 (EF), 134-135 (DA), and 154-157 (DIAQ).

The protein belongs to the methyltransferase superfamily. Fibrillarin family. In terms of assembly, interacts with nop5. Component of box C/D small ribonucleoprotein (sRNP) particles that contain rpl7ae, FlpA and nop5, plus a guide RNA.

Involved in pre-rRNA and tRNA processing. Utilizes the methyl donor S-adenosyl-L-methionine to catalyze the site-specific 2'-hydroxyl methylation of ribose moieties in rRNA and tRNA. Site specificity is provided by a guide RNA that base pairs with the substrate. Methylation occurs at a characteristic distance from the sequence involved in base pairing with the guide RNA. This is Fibrillarin-like rRNA/tRNA 2'-O-methyltransferase from Staphylothermus marinus (strain ATCC 43588 / DSM 3639 / JCM 9404 / F1).